We begin with the raw amino-acid sequence, 677 residues long: Penicillin-binding protein activator LpoA (677 aa).

An N-terminal signal peptide occupies residues 1-26 (MLPSKIVRHKAGRFVPVLLAGLILAA). Residue C27 is the site of N-palmitoyl cysteine attachment. Residue C27 is the site of S-diacylglycerol cysteine attachment. The tract at residues 309 to 359 (QPADANAVVSPSANPAAAQQSGTAQQPATTQQQPQQQPAAEPASNAQVKVY) is disordered. Positions 313-355 (ANAVVSPSANPAAAQQSGTAQQPATTQQQPQQQPAAEPASNAQ) are enriched in low complexity.

This sequence belongs to the LpoA family. Interacts with PBP1a.

The protein resides in the cell outer membrane. Functionally, regulator of peptidoglycan synthesis that is essential for the function of penicillin-binding protein 1A (PBP1a). The chain is Penicillin-binding protein activator LpoA from Pantoea ananatis (strain LMG 20103).